The primary structure comprises 123 residues: Large ribosomal subunit protein uL29 (123 aa).

The protein belongs to the universal ribosomal protein uL29 family. Component of the large ribosomal subunit.

The protein resides in the cytoplasm. Its function is as follows. Component of the large ribosomal subunit. The ribosome is a large ribonucleoprotein complex responsible for the synthesis of proteins in the cell. The sequence is that of Large ribosomal subunit protein uL29 (rpl35) from Ictalurus punctatus (Channel catfish).